The sequence spans 350 residues: Protein-glutamate methylesterase/protein-glutamine glutaminase (350 aa).

The Response regulatory domain occupies 5 to 122 (KVLCVDDSAL…RDGLIEYSEV (118 aa)). 4-aspartylphosphate is present on Asp-56. One can recognise a CheB-type methylesterase domain in the interval 152–346 (PFASSEKLVI…ERILTRLGDR (195 aa)). Active-site residues include Ser-165, His-191, and Asp-288.

The protein belongs to the CheB family. In terms of processing, phosphorylated by CheA. Phosphorylation of the N-terminal regulatory domain activates the methylesterase activity.

It is found in the cytoplasm. It carries out the reaction [protein]-L-glutamate 5-O-methyl ester + H2O = L-glutamyl-[protein] + methanol + H(+). The catalysed reaction is L-glutaminyl-[protein] + H2O = L-glutamyl-[protein] + NH4(+). Involved in chemotaxis. Part of a chemotaxis signal transduction system that modulates chemotaxis in response to various stimuli. Catalyzes the demethylation of specific methylglutamate residues introduced into the chemoreceptors (methyl-accepting chemotaxis proteins or MCP) by CheR. Also mediates the irreversible deamidation of specific glutamine residues to glutamic acid. In Bordetella parapertussis (strain 12822 / ATCC BAA-587 / NCTC 13253), this protein is Protein-glutamate methylesterase/protein-glutamine glutaminase.